A 361-amino-acid chain; its full sequence is Alanine racemase (361 aa).

Lys35 acts as the Proton acceptor; specific for D-alanine in catalysis. Lys35 bears the N6-(pyridoxal phosphate)lysine mark. Residue Arg132 participates in substrate binding. The Proton acceptor; specific for L-alanine role is filled by Tyr257. Residue Met305 coordinates substrate.

The protein belongs to the alanine racemase family. Pyridoxal 5'-phosphate is required as a cofactor.

It catalyses the reaction L-alanine = D-alanine. Its pathway is amino-acid biosynthesis; D-alanine biosynthesis; D-alanine from L-alanine: step 1/1. In terms of biological role, catalyzes the interconversion of L-alanine and D-alanine. May also act on other amino acids. This chain is Alanine racemase (alr), found in Thioalkalivibrio sulfidiphilus (strain HL-EbGR7).